Reading from the N-terminus, the 169-residue chain is Ribosome maturation factor RimM (169 aa).

A PRC barrel domain is found at 91–167 (EGEYYFADLI…RIVIATDFAH (77 aa)).

It belongs to the RimM family. In terms of assembly, binds ribosomal protein uS19.

Its subcellular location is the cytoplasm. An accessory protein needed during the final step in the assembly of 30S ribosomal subunit, possibly for assembly of the head region. Essential for efficient processing of 16S rRNA. May be needed both before and after RbfA during the maturation of 16S rRNA. It has affinity for free ribosomal 30S subunits but not for 70S ribosomes. This chain is Ribosome maturation factor RimM, found in Erythrobacter litoralis (strain HTCC2594).